The primary structure comprises 1025 residues: Interferon-induced helicase C domain-containing protein 1 (1025 aa).

CARD domains follow at residues 7 to 97 and 110 to 190; these read AEDS…YVKP and AHDE…QTGN. Residues K23 and K43 each participate in a glycyl lysine isopeptide (Lys-Gly) (interchain with G-Cter in ISG15) cross-link. A disordered region spans residues 273–297; that stretch reads SLGHNSNMGRDSGTMGSDSDESVIQ. Over residues 275–297 the composition is skewed to polar residues; that stretch reads GHNSNMGRDSGTMGSDSDESVIQ. Phosphoserine is present on residues S289, S291, and S302. The Helicase ATP-binding domain occupies 317 to 510; the sequence is AQPALDGKNI…SEAEKHILNI (194 aa). S645 and S648 each carry phosphoserine. In terms of domain architecture, Helicase C-terminal spans 700 to 872; that stretch reads KLIKLRNTIL…NMKPEEYAHK (173 aa). S828 is subject to Phosphoserine; by RIOK3. The region spanning 893 to 1020 is the RLR CTR domain; that stretch reads AKQYNDNPSL…PDLDYSEYCL (128 aa). Zn(2+) contacts are provided by C907, C910, C962, and C964.

Belongs to the helicase family. RLR subfamily. As to quaternary structure, monomer in the absence of ligands and homodimerizes in the presence of dsRNA ligands. Can assemble into helical or linear polymeric filaments on long dsRNA. Interacts with MAVS/IPS1. Interacts (via the CARD domains) with TKFC, the interaction is inhibited by viral infection. Interacts with PCBP2. Interacts with NLRC5. Interacts with PIAS2-beta. Interacts with DDX60. Interacts with ANKRD17. Interacts with IKBKE. Interacts with ATG5 and ATG12, either as ATG5 and ATG12 monomers or as ATG12-ATG5 conjugates. Interacts with ZCCHC3; leading to activate IFIH1/MDA5. Interacts with RNF123. Interacts with DDX3X. Interacts with NOD1; this interaction promotes transcription of antiviral genes and inhibition of viral replication. Interacts with ECSIT; this interaction bridges IFIH1 to the MAVS complex at the mitochondrion. Post-translationally, during apoptosis, processed into 3 cleavage products. The helicase-containing fragment, once liberated from the CARD domains, translocate from the cytoplasm to the nucleus. The processed protein significantly sensitizes cells to DNA degradation. In terms of processing, sumoylated. Sumoylation positively regulates its role in type I interferon induction and is enhanced by PIAS2-beta. Ubiquitinated by RNF125, leading to its degradation by the proteasome. USP17/UPS17L2-dependent deubiquitination positively regulates the receptor. Ubiquitinated by TRIM25 via 'Lys-63'-linked ubiquitination, promoting activation of IFIH1/MDA5. Ubiquitinated by TRIM40 via 'Lys-48'-linked ubiquitination; leading to proteasomal degradation. Ubiquitinated by TRIM65 via 'Lys-63'-linked ubiquitination, promoting activation of IFIH1/MDA5. Post-translationally, ISGylated by ISG15. ISGylation increases upon infection with viruses. ISGylation at Lys-23 and Lys-43 is dependent of dephosphorylation, regulates mitochondrial translocation and oligomerization. Essential for IFIH1/MDA5-mediated cytokine responses and restriction of virus replication. In terms of processing, phosphorylated. Dephosphorylated by phsophatases PP1; dephosphorylation precedes and is required for ISGylation. As to expression, expression is prominent in lung, liver, kidney, heart and spleen (at protein level). Widely expressed at low level.

It is found in the cytoplasm. Its subcellular location is the nucleus. It localises to the mitochondrion. The enzyme catalyses ATP + H2O = ADP + phosphate + H(+). Its function is as follows. Innate immune receptor which acts as a cytoplasmic sensor of viral nucleic acids and plays a major role in sensing viral infection and in the activation of a cascade of antiviral responses including the induction of type I interferons and pro-inflammatory cytokines. Its ligands include mRNA lacking 2'-O-methylation at their 5' cap and long-dsRNA (&gt;1 kb in length). Upon ligand binding it associates with mitochondria antiviral signaling protein (MAVS/IPS1) which activates the IKK-related kinases: TBK1 and IKBKE which phosphorylate interferon regulatory factors: IRF3 and IRF7 which in turn activate transcription of antiviral immunological genes, including interferons (IFNs); IFN-alpha and IFN-beta. Responsible for detecting the Picornaviridae family members such as encephalomyocarditis virus (EMCV), mengo encephalomyocarditis virus (ENMG), and theiler's murine encephalomyelitis virus (TMEV). Can also detect other viruses such as dengue virus (DENV), west Nile virus (WNV), and reovirus. Also involved in antiviral signaling in response to viruses containing a dsDNA genome, such as vaccinia virus. Plays an important role in amplifying innate immune signaling through recognition of RNA metabolites that are produced during virus infection by ribonuclease L (RNase L). May play an important role in enhancing natural killer cell function and may be involved in growth inhibition and apoptosis in several tumor cell lines. The chain is Interferon-induced helicase C domain-containing protein 1 from Mus musculus (Mouse).